We begin with the raw amino-acid sequence, 56 residues long: Cruciferin (56 aa).

Residue Thr45 is modified to Phosphothreonine.

The protein belongs to the 11S seed storage protein (globulins) family. As to quaternary structure, hexamer; each subunit is composed of an acidic and a basic chain derived from a single precursor and linked by a disulfide bond.

This is a seed storage protein. The polypeptide is Cruciferin (Sinapis alba (White mustard)).